The primary structure comprises 104 residues: Large ribosomal subunit protein bL21 (104 aa).

The protein belongs to the bacterial ribosomal protein bL21 family. In terms of assembly, part of the 50S ribosomal subunit. Contacts protein L20.

Its function is as follows. This protein binds to 23S rRNA in the presence of protein L20. The protein is Large ribosomal subunit protein bL21 of Clostridium tetani (strain Massachusetts / E88).